Here is a 112-residue protein sequence, read N- to C-terminus: T cell receptor alpha variable 17 (112 aa).

An N-terminal signal peptide occupies residues 1 to 21; that stretch reads METLLGVSLVILWLQLARVNS. Positions 22 to 112 constitute an Ig-like domain; the sequence is QQGEEDPQAL…DTASYFCATD (91 aa). 2 N-linked (GlcNAc...) asparagine glycosylation sites follow: N38 and N42. C43 and C109 are disulfide-bonded.

Alpha-beta TR is a heterodimer composed of an alpha and beta chain; disulfide-linked. The alpha-beta TR is associated with the transmembrane signaling CD3 coreceptor proteins to form the TR-CD3 (TcR or TCR). The assembly of alpha-beta TR heterodimers with CD3 occurs in the endoplasmic reticulum where a single alpha-beta TR heterodimer associates with one CD3D-CD3E heterodimer, one CD3G-CD3E heterodimer and one CD247 homodimer forming a stable octameric structure. CD3D-CD3E and CD3G-CD3E heterodimers preferentially associate with TR alpha and TR beta chains, respectively. The association of the CD247 homodimer is the last step of TcR assembly in the endoplasmic reticulum and is required for transport to the cell surface.

The protein localises to the cell membrane. V region of the variable domain of T cell receptor (TR) alpha chain that participates in the antigen recognition. Alpha-beta T cell receptors are antigen specific receptors which are essential to the immune response and are present on the cell surface of T lymphocytes. Recognize peptide-major histocompatibility (MH) (pMH) complexes that are displayed by antigen presenting cells (APC), a prerequisite for efficient T cell adaptive immunity against pathogens. Binding of alpha-beta TR to pMH complex initiates TR-CD3 clustering on the cell surface and intracellular activation of LCK that phosphorylates the ITAM motifs of CD3G, CD3D, CD3E and CD247 enabling the recruitment of ZAP70. In turn ZAP70 phosphorylates LAT, which recruits numerous signaling molecules to form the LAT signalosome. The LAT signalosome propagates signal branching to three major signaling pathways, the calcium, the mitogen-activated protein kinase (MAPK) kinase and the nuclear factor NF-kappa-B (NF-kB) pathways, leading to the mobilization of transcription factors that are critical for gene expression and essential for T cell growth and differentiation. The T cell repertoire is generated in the thymus, by V-(D)-J rearrangement. This repertoire is then shaped by intrathymic selection events to generate a peripheral T cell pool of self-MH restricted, non-autoaggressive T cells. Post-thymic interaction of alpha-beta TR with the pMH complexes shapes TR structural and functional avidity. The protein is T cell receptor alpha variable 17 of Homo sapiens (Human).